A 469-amino-acid polypeptide reads, in one-letter code: Coiled-coil domain-containing protein 6 (469 aa).

The segment covering Met1 to Thr10 has biased composition (acidic residues). Residues Met1–Gly37 are disordered. Residue Ala2 is modified to N-acetylalanine. Ser45 bears the Phosphoserine mark. The stretch at Phe47–Ser320 forms a coiled coil. A run of 3 repeats spans residues Glu99–Tyr127, Glu128–Leu156, and Glu157–Leu185. The segment at Glu99 to Leu228 is 5 X 29 AA tandem repeats. A 4; approximate repeat occupies Glu186–Leu199. The stretch at Glu200–Leu228 is repeat 5. Phosphoserine occurs at positions 233, 237, 242, 247, 277, and 316. Positions Ala335–Gly362 are disordered. A Phosphothreonine modification is found at Thr342. Low complexity predominate over residues Ser344–Pro361. 2 positions are modified to phosphoserine: Ser356 and Ser360. Arg380 carries the post-translational modification Omega-N-methylarginine. A phosphoserine mark is found at Ser388 and Ser406. A disordered region spans residues Gln394–Pro469. The segment covering Pro419–Pro444 has biased composition (pro residues). The short motif at Pro435 to Pro444 is the SH3-binding element. Residues Gln460 to Pro469 show a composition bias toward low complexity.

It localises to the cytoplasm. The protein resides in the cytoskeleton. This chain is Coiled-coil domain-containing protein 6 (Ccdc6), found in Mus musculus (Mouse).